A 33-amino-acid chain; its full sequence is MNAELIVQLGSLALITVAGPAIIVLLFLKQGNL.

The chain crosses the membrane as a helical span at residues 5-25 (LIVQLGSLALITVAGPAIIVL).

The protein belongs to the Psb30/Ycf12 family. As to quaternary structure, PSII is composed of 1 copy each of membrane proteins PsbA, PsbB, PsbC, PsbD, PsbE, PsbF, PsbH, PsbI, PsbJ, PsbK, PsbL, PsbM, PsbT, PsbY, PsbZ, Psb30/Ycf12, peripheral proteins of the oxygen-evolving complex and a large number of cofactors. It forms dimeric complexes.

It is found in the plastid. The protein resides in the chloroplast thylakoid membrane. Its function is as follows. A core subunit of photosystem II (PSII), probably helps stabilize the reaction center. The sequence is that of Photosystem II reaction center protein Psb30 from Euglena stellata.